The following is a 254-amino-acid chain: Type III pantothenate kinase (254 aa).

22-29 (VLGNTHVR) contacts ATP. Substrate is bound by residues Tyr89 and 93–96 (GLDR). Asp95 acts as the Proton acceptor in catalysis. Residue Asp115 participates in K(+) binding. Thr118 contributes to the ATP binding site. Thr173 is a binding site for substrate.

It belongs to the type III pantothenate kinase family. In terms of assembly, homodimer. NH4(+) serves as cofactor. The cofactor is K(+).

The protein resides in the cytoplasm. The enzyme catalyses (R)-pantothenate + ATP = (R)-4'-phosphopantothenate + ADP + H(+). Its pathway is cofactor biosynthesis; coenzyme A biosynthesis; CoA from (R)-pantothenate: step 1/5. In terms of biological role, catalyzes the phosphorylation of pantothenate (Pan), the first step in CoA biosynthesis. The chain is Type III pantothenate kinase from Synechococcus sp. (strain JA-2-3B'a(2-13)) (Cyanobacteria bacterium Yellowstone B-Prime).